Here is a 383-residue protein sequence, read N- to C-terminus: Chaperone protein DnaJ (383 aa).

The J domain occupies 6–70; sequence DYYDVLGVGR…QKRAAYDQYG (65 aa). The segment at 140–222 adopts a CR-type zinc-finger fold; the sequence is GKETKISYSR…CHGTGREEER (83 aa). Residues C153, C156, C170, C173, C196, C199, C210, and C213 each contribute to the Zn(2+) site. 4 CXXCXGXG motif repeats span residues 153-160, 170-177, 196-203, and 210-217; these read CHTCHGSG, CHKCHGAG, CDVCGGTG, and CDTCHGTG.

This sequence belongs to the DnaJ family. Homodimer. It depends on Zn(2+) as a cofactor.

The protein localises to the cytoplasm. In terms of biological role, participates actively in the response to hyperosmotic and heat shock by preventing the aggregation of stress-denatured proteins and by disaggregating proteins, also in an autonomous, DnaK-independent fashion. Unfolded proteins bind initially to DnaJ; upon interaction with the DnaJ-bound protein, DnaK hydrolyzes its bound ATP, resulting in the formation of a stable complex. GrpE releases ADP from DnaK; ATP binding to DnaK triggers the release of the substrate protein, thus completing the reaction cycle. Several rounds of ATP-dependent interactions between DnaJ, DnaK and GrpE are required for fully efficient folding. Also involved, together with DnaK and GrpE, in the DNA replication of plasmids through activation of initiation proteins. The sequence is that of Chaperone protein DnaJ from Latilactobacillus sakei subsp. sakei (strain 23K) (Lactobacillus sakei subsp. sakei).